The following is a 467-amino-acid chain: Replication factor C large subunit (467 aa).

47 to 54 (GPPGVGKT) is an ATP binding site.

The protein belongs to the activator 1 small subunits family. RfcL subfamily. As to quaternary structure, heteromultimer composed of small subunits (RfcS) and large subunits (RfcL).

In terms of biological role, part of the RFC clamp loader complex which loads the PCNA sliding clamp onto DNA. In Methanothrix thermoacetophila (strain DSM 6194 / JCM 14653 / NBRC 101360 / PT) (Methanosaeta thermophila), this protein is Replication factor C large subunit.